Here is a 435-residue protein sequence, read N- to C-terminus: Salicylate hydroxylase (435 aa).

Residue 12–41 coordinates FAD; sequence RVAIVGGGISGLALALSLCKHSHLNVQLFE.

FAD serves as cofactor.

It carries out the reaction salicylate + NADH + O2 + 2 H(+) = catechol + CO2 + NAD(+) + H2O. Its pathway is aromatic compound metabolism; naphthalene degradation. This is Salicylate hydroxylase (nahG) from Pseudomonas putida (Arthrobacter siderocapsulatus).